We begin with the raw amino-acid sequence, 334 residues long: Small ribosomal subunit protein RACK1z (334 aa).

7 WD repeats span residues 16 to 47 (GHNDVVTAIATPIDNSPFIVSSSRDKSLLVWD), 73 to 103 (GHSHFVQDVVLSSDGQFALSGSWDGELRLWD), 115 to 145 (GHDKDVLSVAFSVDNRQIVSASRDRTIKLWN), 163 to 195 (GHNGWVSCVRFSPNTFQPTIVSGSWDRTVKVWN), 207 to 237 (GHGGYVNAVAVSPDGSLCASGGKDGVTLLWD), 248 to 277 (DAGSIIHSLCFSPNRYWLCAATQDSIKIWD), and 296 to 326 (NQMLYCTSLNWSADGSTLYAGYTDGTIRIYK).

The protein belongs to the WD repeat G protein beta family. Ribosomal protein RACK1 subfamily. Interacts with RAC1, RAC3, RAC6, RAR1, SGT1 and RBOHB. Homodimer and heterodimer with RACK1B. In terms of tissue distribution, widely expressed.

It is found in the cytoplasm. Its subcellular location is the cell membrane. Functionally, component of the RACK1 regulatory proteins that functions in innate immunity by interacting with multiple proteins in the RAC1 immune complex. Acts as a positive regulator of reactive oxygen species (ROS) production and is required for resistance against rice blast (M.grisea) infection. The sequence is that of Small ribosomal subunit protein RACK1z (RACK1A) from Oryza sativa subsp. japonica (Rice).